The sequence spans 216 residues: Nucleoside triphosphate pyrophosphatase (216 aa).

Aspartate 82 functions as the Proton acceptor in the catalytic mechanism.

It belongs to the Maf family. Requires a divalent metal cation as cofactor.

The protein localises to the cytoplasm. The enzyme catalyses a ribonucleoside 5'-triphosphate + H2O = a ribonucleoside 5'-phosphate + diphosphate + H(+). It carries out the reaction a 2'-deoxyribonucleoside 5'-triphosphate + H2O = a 2'-deoxyribonucleoside 5'-phosphate + diphosphate + H(+). Its function is as follows. Nucleoside triphosphate pyrophosphatase. May have a dual role in cell division arrest and in preventing the incorporation of modified nucleotides into cellular nucleic acids. This Mycobacterium marinum (strain ATCC BAA-535 / M) protein is Nucleoside triphosphate pyrophosphatase.